Consider the following 185-residue polypeptide: MSDSKDELIRMFFDEEAILFGRFILTSGKESNYYINVKKLSTKPRALKLIAKLMAGEAQKRGITFDRVAGPELGAVPIATALALETEKPLVIVRKKPKGHGTGSQLEGEVKAGDKVLLVEDVTTTGGSVLRAAEVLEREGAEIAAIMVVVDREEGAEETIGAKYTFLPLVRVSELFARRKEPQKE.

Residues arginine 94, lysine 95, lysine 98, histidine 100, and 120–128 (EDVTTTGGS) each bind 5-phospho-alpha-D-ribose 1-diphosphate. Orotate-binding residues include threonine 124 and arginine 152.

It belongs to the purine/pyrimidine phosphoribosyltransferase family. PyrE subfamily. In terms of assembly, homodimer. Requires Mg(2+) as cofactor.

It carries out the reaction orotidine 5'-phosphate + diphosphate = orotate + 5-phospho-alpha-D-ribose 1-diphosphate. It participates in pyrimidine metabolism; UMP biosynthesis via de novo pathway; UMP from orotate: step 1/2. Its function is as follows. Catalyzes the transfer of a ribosyl phosphate group from 5-phosphoribose 1-diphosphate to orotate, leading to the formation of orotidine monophosphate (OMP). The chain is Orotate phosphoribosyltransferase from Thermococcus kodakarensis (strain ATCC BAA-918 / JCM 12380 / KOD1) (Pyrococcus kodakaraensis (strain KOD1)).